The following is a 468-amino-acid chain: uncharacterized protein (468 aa).

The tract at residues 1 to 22 (MVKRSSHRQVVLDEDDEENYNN) is disordered. The RING-type zinc-finger motif lies at 85–123 (CPICTEALQRPFTTHCGHTYCYECLLNWLKESKSCPTCR). The segment covering 386–402 (DSLNSSSNNSPSHNNIH) has biased composition (low complexity). Positions 386 to 468 (DSLNSSSNNS…TIQLDSDEES (83 aa)) are disordered. A compositionally biased stretch (polar residues) spans 417-434 (IVTNGTGLRSSQSSSQNR).

The protein localises to the nucleus. This is an uncharacterized protein from Schizosaccharomyces pombe (strain 972 / ATCC 24843) (Fission yeast).